Reading from the N-terminus, the 469-residue chain is Diaminopimelate decarboxylase (469 aa).

Positions 1-23 (MLSTEMPLPTTGSTLLKTPASPS) are disordered. Residue K93 is modified to N6-(pyridoxal phosphate)lysine. Pyridoxal 5'-phosphate is bound by residues G279 and 321–324 (EPGR). R324, R361, and Y365 together coordinate substrate. C392 (proton donor) is an active-site residue. E393 and Y421 together coordinate substrate. Y421 provides a ligand contact to pyridoxal 5'-phosphate.

Belongs to the Orn/Lys/Arg decarboxylase class-II family. LysA subfamily. As to quaternary structure, homodimer. It depends on pyridoxal 5'-phosphate as a cofactor.

The enzyme catalyses meso-2,6-diaminopimelate + H(+) = L-lysine + CO2. It functions in the pathway amino-acid biosynthesis; L-lysine biosynthesis via DAP pathway; L-lysine from DL-2,6-diaminopimelate: step 1/1. In terms of biological role, specifically catalyzes the decarboxylation of meso-diaminopimelate (meso-DAP) to L-lysine. This Synechocystis sp. (strain ATCC 27184 / PCC 6803 / Kazusa) protein is Diaminopimelate decarboxylase.